The sequence spans 173 residues: MVTVREAKLEDIKDIAKVHVDSWRTTYHEIIPIDYLNSLNYKEFEDKWKSRSLKGVFVAQDEKGSVFGFASFGPIRSEQEGYDGELYAIYLLEERQRQGAGRALLAKGAEFLLQHGFSSMFVWVIEQNPSIIFYQAYSPERVAEDNFEIAGVRLKEVGLGWPDLSALKTLLNR.

Residues 2 to 171 enclose the N-acetyltransferase domain; the sequence is VTVREAKLED…PDLSALKTLL (170 aa).

The protein belongs to the acetyltransferase family.

This is an uncharacterized protein from Bacillus subtilis (strain 168).